A 337-amino-acid polypeptide reads, in one-letter code: Ribosomal RNA small subunit methyltransferase C (337 aa).

It belongs to the methyltransferase superfamily. RsmC family. Monomer.

Its subcellular location is the cytoplasm. The catalysed reaction is guanosine(1207) in 16S rRNA + S-adenosyl-L-methionine = N(2)-methylguanosine(1207) in 16S rRNA + S-adenosyl-L-homocysteine + H(+). Functionally, specifically methylates the guanine in position 1207 of 16S rRNA in the 30S particle. This Acinetobacter baumannii (strain ACICU) protein is Ribosomal RNA small subunit methyltransferase C.